A 123-amino-acid polypeptide reads, in one-letter code: Ribosome-binding factor A (123 aa).

Belongs to the RbfA family. As to quaternary structure, monomer. Binds 30S ribosomal subunits, but not 50S ribosomal subunits or 70S ribosomes.

The protein localises to the cytoplasm. In terms of biological role, one of several proteins that assist in the late maturation steps of the functional core of the 30S ribosomal subunit. Associates with free 30S ribosomal subunits (but not with 30S subunits that are part of 70S ribosomes or polysomes). Required for efficient processing of 16S rRNA. May interact with the 5'-terminal helix region of 16S rRNA. The polypeptide is Ribosome-binding factor A (Rickettsia bellii (strain OSU 85-389)).